We begin with the raw amino-acid sequence, 435 residues long: Trigger factor (435 aa).

The region spanning 163 to 248 (GDRVTIDFEG…LTRIEAQNLP (86 aa)) is the PPIase FKBP-type domain.

This sequence belongs to the FKBP-type PPIase family. Tig subfamily.

Its subcellular location is the cytoplasm. It catalyses the reaction [protein]-peptidylproline (omega=180) = [protein]-peptidylproline (omega=0). In terms of biological role, involved in protein export. Acts as a chaperone by maintaining the newly synthesized protein in an open conformation. Functions as a peptidyl-prolyl cis-trans isomerase. This is Trigger factor from Leptothrix cholodnii (strain ATCC 51168 / LMG 8142 / SP-6) (Leptothrix discophora (strain SP-6)).